The sequence spans 594 residues: Zinc finger protein 37 (594 aa).

Residues methionine 1–lysine 253 are disordered. Threonine 3 carries the post-translational modification Phosphothreonine. The KRAB domain occupies threonine 3 to lysine 74. Phosphoserine is present on serine 9. The span at aspartate 10–leucine 33 shows a compositional bias: basic and acidic residues. Over residues glutamate 34 to aspartate 46 the composition is skewed to polar residues. The span at glutamine 89 to leucine 111 shows a compositional bias: basic and acidic residues. Positions lysine 145–aspartate 158 are enriched in polar residues. Composition is skewed to basic and acidic residues over residues serine 159–lysine 172 and valine 181–lysine 234. 12 C2H2-type zinc fingers span residues tyrosine 255–histidine 277, tyrosine 283–histidine 305, tyrosine 311–histidine 324, tyrosine 339–histidine 361, tyrosine 367–histidine 389, tyrosine 395–histidine 417, phenylalanine 423–histidine 445, tyrosine 451–histidine 473, phenylalanine 479–histidine 501, tyrosine 507–histidine 529, phenylalanine 535–histidine 557, and tyrosine 563–histidine 585.

This sequence belongs to the krueppel C2H2-type zinc-finger protein family. In terms of tissue distribution, expressed in testis and brain.

It is found in the nucleus. May have a role in regulating spermiogenesis. In Mus musculus (Mouse), this protein is Zinc finger protein 37 (Zfp37).